Reading from the N-terminus, the 286-residue chain is Acetylglutamate kinase (286 aa).

Substrate-binding positions include 70 to 71 (GG), arginine 92, and asparagine 184.

Belongs to the acetylglutamate kinase family. ArgB subfamily.

The protein localises to the cytoplasm. It carries out the reaction N-acetyl-L-glutamate + ATP = N-acetyl-L-glutamyl 5-phosphate + ADP. The protein operates within amino-acid biosynthesis; L-arginine biosynthesis; N(2)-acetyl-L-ornithine from L-glutamate: step 2/4. In terms of biological role, catalyzes the ATP-dependent phosphorylation of N-acetyl-L-glutamate. In Ruegeria sp. (strain TM1040) (Silicibacter sp.), this protein is Acetylglutamate kinase.